The sequence spans 265 residues: Novel plant SNARE 11 (265 aa).

Residues 1-215 (MDPISAVSEE…IGRQVATDKC (215 aa)) are Cytoplasmic-facing. Residues 30-75 (QKLEKIKDANRQSRQLEELTDKMRDCKSLIKDFDREIKSLESGNDA) are a coiled coil. A t-SNARE coiled-coil homology domain is found at 144-206 (NSMMDDTDQA…KKASKLVKEI (63 aa)). The chain crosses the membrane as a helical; Anchor for type IV membrane protein span at residues 216–236 (IMAFLFLIVIGVIAIIIVKIV). At 237–265 (NPNNKDIRDIPGVGLAPPAMNRRLLWNHY) the chain is on the vesicular side.

This sequence belongs to the novel plant SNARE family. As to quaternary structure, interacts with KNOLLE to form a t-SNARE complex. Does not interact with SYP21, VTI12 or VPS45. Expressed in roots, stems, flower, siliques, expanding leaves, but not in mature leaves. Not limited to dividing cells.

Its subcellular location is the membrane. Its function is as follows. t-SNARE involved in diverse vesicle trafficking and membrane fusion processes, including cell plate formation. The chain is Novel plant SNARE 11 (NPSN11) from Arabidopsis thaliana (Mouse-ear cress).